A 64-amino-acid polypeptide reads, in one-letter code: Cecropin-A (64 aa).

The N-terminal stretch at Met1 to Ala22 is a signal peptide. A propeptide spans Ala23 to Pro26 (removed by a dipeptidylpeptidase). Lys63 carries the lysine amide modification.

It belongs to the cecropin family. In terms of processing, a protein with the same sequence as cecropin A, but lacking the carboxyl blocking group, has been isolated and called cecropin C.

The protein localises to the secreted. Cecropins have lytic and antibacterial activity against several Gram-positive and Gram-negative bacteria. The protein is Cecropin-A of Hyalophora cecropia (Cecropia moth).